The sequence spans 252 residues: Aliphatic sulfonates import ATP-binding protein SsuB 1 (252 aa).

Positions 6–234 (LQLHIAGKRF…PRDRQAHEAA (229 aa)) constitute an ABC transporter domain. 38 to 45 (GASGCGKS) lines the ATP pocket.

Belongs to the ABC transporter superfamily. Aliphatic sulfonates importer (TC 3.A.1.17.2) family. As to quaternary structure, the complex is composed of two ATP-binding proteins (SsuB), two transmembrane proteins (SsuC) and a solute-binding protein (SsuA).

Its subcellular location is the cell inner membrane. The catalysed reaction is ATP + H2O + aliphatic sulfonate-[sulfonate-binding protein]Side 1 = ADP + phosphate + aliphatic sulfonateSide 2 + [sulfonate-binding protein]Side 1.. Its function is as follows. Part of the ABC transporter complex SsuABC involved in aliphatic sulfonates import. Responsible for energy coupling to the transport system. This is Aliphatic sulfonates import ATP-binding protein SsuB 1 from Xanthomonas axonopodis pv. citri (strain 306).